The sequence spans 171 residues: Cytochrome c oxidase subunit 5, mitochondrial (171 aa).

The N-terminal 27 residues, 1 to 27 (MLRTPTVSALVRNVAVRAAKPTMAVRA), are a transit peptide targeting the mitochondrion. The Mitochondrial matrix segment spans residues 28–100 (ASTMPISNPT…ALPPPGEQKK (73 aa)). Residues 101 to 123 (VLAYTVAGVFLSFVIFATMRAFA) traverse the membrane as a helical segment. The Mitochondrial intermembrane segment spans residues 124–171 (KPPPATMTKEWQEATNEFLKAQKSDPLTGLTSEGYNGKGHVQSPSASA). Positions 145-171 (QKSDPLTGLTSEGYNGKGHVQSPSASA) are disordered.

The protein belongs to the cytochrome c oxidase IV family. As to quaternary structure, component of the cytochrome c oxidase (complex IV, CIV), a multisubunit enzyme composed of 11 subunits. The complex is composed of a catalytic core of 3 subunits Cox1, Cox2 and Cox3, encoded in the mitochondrial DNA, and 8 supernumerary subunits Cox4, Cox5a/Cox5, Cox6, Cox7, Cox8, Cox7a/Cox9, Cox6b/Cox12 and Cox6a/Cox13, which are encoded in the nuclear genome. The complex exists as a monomer or a dimer and forms respiratory supercomplexes (SCs) in the inner mitochondrial membrane with NADH-ubiquinone oxidoreductase (complex I, CI) and ubiquinol-cytochrome c oxidoreductase (cytochrome b-c1 complex, complex III, CIII), resulting in various different assemblies (supercomplexes I(1)IV(1), I(1)III(3)IV(2), III(2)IV(1) and III(2)IV(2) as well as larger supercomplexes of compositions like I(1)III(2)IV(5-6)).

The protein localises to the mitochondrion inner membrane. The protein operates within energy metabolism; oxidative phosphorylation. In terms of biological role, component of the cytochrome c oxidase, the last enzyme in the mitochondrial electron transport chain which drives oxidative phosphorylation. The respiratory chain contains 3 multisubunit complexes succinate dehydrogenase (complex II, CII), ubiquinol-cytochrome c oxidoreductase (cytochrome b-c1 complex, complex III, CIII) and cytochrome c oxidase (complex IV, CIV), that cooperate to transfer electrons derived from NADH and succinate to molecular oxygen, creating an electrochemical gradient over the inner membrane that drives transmembrane transport and the ATP synthase. Cytochrome c oxidase is the component of the respiratory chain that catalyzes the reduction of oxygen to water. Electrons originating from reduced cytochrome c in the intermembrane space (IMS) are transferred via the dinuclear copper A center (CU(A)) of Cox2 and heme A of Cox1 to the active site in Cox1, a binuclear center (BNC) formed by heme A3 and copper B (CU(B)). The BNC reduces molecular oxygen to 2 water molecules using 4 electrons from cytochrome c in the IMS and 4 protons from the mitochondrial matrix. In Neurospora crassa (strain ATCC 24698 / 74-OR23-1A / CBS 708.71 / DSM 1257 / FGSC 987), this protein is Cytochrome c oxidase subunit 5, mitochondrial (cya-4).